Reading from the N-terminus, the 161-residue chain is SsrA-binding protein (161 aa).

It belongs to the SmpB family.

It is found in the cytoplasm. Functionally, required for rescue of stalled ribosomes mediated by trans-translation. Binds to transfer-messenger RNA (tmRNA), required for stable association of tmRNA with ribosomes. tmRNA and SmpB together mimic tRNA shape, replacing the anticodon stem-loop with SmpB. tmRNA is encoded by the ssrA gene; the 2 termini fold to resemble tRNA(Ala) and it encodes a 'tag peptide', a short internal open reading frame. During trans-translation Ala-aminoacylated tmRNA acts like a tRNA, entering the A-site of stalled ribosomes, displacing the stalled mRNA. The ribosome then switches to translate the ORF on the tmRNA; the nascent peptide is terminated with the 'tag peptide' encoded by the tmRNA and targeted for degradation. The ribosome is freed to recommence translation, which seems to be the essential function of trans-translation. This is SsrA-binding protein from Vibrio campbellii (strain ATCC BAA-1116).